The following is a 201-amino-acid chain: Ras-related protein Rab-9A (201 aa).

Ala2 is modified (N-acetylalanine). Gly17 is a GDP binding site. GTP-binding residues include Gly17, Val18, Gly19, Lys20, Ser21, Ser22, Thr34, His38, and Thr39. 4 residues coordinate GDP: Gly19, Lys20, Ser21, and Ser22. Ser21 contacts Mg(2+). The short motif at 31–42 is the Switch 1 element; it reads KFDTQLFHTIGV. Residues Thr39 and Asp62 each coordinate Mg(2+). Positions 64-78 match the Switch 2 motif; that stretch reads AGQERFRSLRTPFYR. Residues Gly65, Asn124, Lys125, Asp127, Ala155, and Lys156 each coordinate GTP. Residues Asn124, Lys125, Asp127, Ala155, and Lys156 each contribute to the GDP site. At Ser179 the chain carries Phosphoserine. Phosphothreonine is present on Thr187. S-geranylgeranyl cysteine attachment occurs at residues Cys200 and Cys201.

This sequence belongs to the small GTPase superfamily. Rab family. In terms of assembly, interacts (preferentially in its GTP-bound form) with GCC2 (via its GRIP domain). Interacts (GTP-bound form) with SGSM1; the GDP-bound form has much lower affinity for SGSM1. Interacts with SGSM2. The GTP-bound form but not the GDP-bound form interacts with HPS4 and BLOC-3 complex (heterodimer of HPS1 and HPS4) but does not interact with HPS1 alone. Interacts (GTP-bound form) with NDE1; two RAB9A-GTP molecules lie on the opposite sides of the NDE1 homodimer; the interaction leads to RAB9A-dynein motor tethering. Interacts (GTP-bound form) with NDEL1. Mg(2+) is required as a cofactor.

The protein localises to the cell membrane. The protein resides in the endoplasmic reticulum membrane. Its subcellular location is the golgi apparatus membrane. It is found in the late endosome. It localises to the cytoplasmic vesicle. The protein localises to the phagosome membrane. The protein resides in the phagosome. Its subcellular location is the cytoplasmic vesicle membrane. It is found in the melanosome. The catalysed reaction is GTP + H2O = GDP + phosphate + H(+). Its activity is regulated as follows. Regulated by guanine nucleotide exchange factors (GEFs) which promote the exchange of bound GDP for free GTP. Regulated by GTPase activating proteins (GAPs) which increase the GTP hydrolysis activity. Inhibited by GDP dissociation inhibitors (GDIs). In terms of biological role, the small GTPases Rab are key regulators of intracellular membrane trafficking, from the formation of transport vesicles to their fusion with membranes. Rabs cycle between an inactive GDP-bound form and an active GTP-bound form that is able to recruit to membranes different sets of downstream effectors directly responsible for vesicle formation, movement, tethering and fusion. RAB9A is involved in the transport of proteins between the endosomes and the trans-Golgi network (TGN). Specifically uses NDE1/NDEL1 as an effector to interact with the dynein motor complex in order to control retrograde trafficking of RAB9-associated late endosomes to the TGN. Involved in the recruitment of SGSM2 to melanosomes and is required for the proper trafficking of melanogenic enzymes TYR, TYRP1 and DCT/TYRP2 to melanosomes in melanocytes. The polypeptide is Ras-related protein Rab-9A (Homo sapiens (Human)).